We begin with the raw amino-acid sequence, 597 residues long: DNA import protein CedB (597 aa).

The helical transmembrane segment at 10–30 (VVLLILGIISFNLVFIILAII) threads the bilayer. ATP is bound at residue 286 to 293 (GPTGSGKT).

Its subcellular location is the cell membrane. Its function is as follows. Part of the Ced system, which is involved in DNA import. In Sulfolobus acidocaldarius (strain ATCC 33909 / DSM 639 / JCM 8929 / NBRC 15157 / NCIMB 11770), this protein is DNA import protein CedB.